The following is a 543-amino-acid chain: EH domain-containing protein 2 (543 aa).

Position 3 is a phosphoserine (S3). Positions 55–286 (FDGKPMVLVA…DLFRDIQGLP (232 aa)) constitute a Dynamin-type G domain. Residues 65 to 72 (GQYSTGKT) form a G1 motif region. 65–72 (GQYSTGKT) lines the ATP pocket. The interval 91 to 92 (EP) is G2 motif. The KPF loop; caveolar targeting signature appears at 120–122 (KPF). Residues 153–156 (DTPG) are G3 motif. The G4 motif stretch occupies residues 219-222 (NKAD). Residue K220 participates in ATP binding. V243 is a region of interest (G5 motif). W258 provides a ligand contact to ATP. A mediates membrane-binding region spans residues 320-340 (SVFGKENKKKQLILKLPVIFA). S438, S468, S470, S484, and S493 each carry phosphoserine. The EH domain occupies 449-537 (DKSKYDEIFY…RRLVPPSKRR (89 aa)). The EF-hand domain maps to 481–516 (LPNSVLGRIWKLSDVDRDGMLDDEEFALASHLIEAK). Positions 494, 496, 498, 500, and 505 each coordinate Ca(2+). The tract at residues 523-543 (PANLPRRLVPPSKRRHKGSAE) is disordered. Positions 534 to 543 (SKRRHKGSAE) are enriched in basic residues.

Belongs to the TRAFAC class dynamin-like GTPase superfamily. Dynamin/Fzo/YdjA family. EHD subfamily. As to quaternary structure, homodimer and homooligomer. Interacts with EHD1. May also interact with EHD3 and EHD4. Interacts with MYOF. Interacts with EHBP1. Interacts with FER1L5 (via second C2 domain). Interacts with CAV1 in a cholesterol-dependent manner. Interacts (via EH domain) with PACSIN2 (via NPF motifs); this interaction probably stabilizes the caveolae. As to expression, highly expressed in heart and moderately expressed in placenta, lung, and skeletal muscle.

The protein resides in the cell membrane. The protein localises to the membrane. It localises to the caveola. Its subcellular location is the endosome membrane. It is found in the cytoplasm. The protein resides in the cytosol. With respect to regulation, the very low intrinsic ATPase activity is increased upon interaction with liposomes. Functionally, ATP- and membrane-binding protein that controls membrane reorganization/tubulation upon ATP hydrolysis. Plays a role in membrane trafficking between the plasma membrane and endosomes. Important for the internalization of GLUT4. Required for fusion of myoblasts to skeletal muscle myotubes. Required for normal translocation of FER1L5 to the plasma membrane. Regulates the equilibrium between cell surface-associated and cell surface-dissociated caveolae by constraining caveolae at the cell membrane. This is EH domain-containing protein 2 from Homo sapiens (Human).